The following is a 107-amino-acid chain: Iron-binding protein IscA (107 aa).

Fe cation-binding residues include cysteine 35, cysteine 99, and cysteine 101.

The protein belongs to the HesB/IscA family. As to quaternary structure, homodimer; may form tetramers and higher multimers. Requires Fe cation as cofactor.

In terms of biological role, is able to transfer iron-sulfur clusters to apo-ferredoxin. Multiple cycles of [2Fe2S] cluster formation and transfer are observed, suggesting that IscA acts catalytically. Recruits intracellular free iron so as to provide iron for the assembly of transient iron-sulfur cluster in IscU in the presence of IscS, L-cysteine and the thioredoxin reductase system TrxA/TrxB. In Klebsiella pneumoniae subsp. pneumoniae (strain ATCC 700721 / MGH 78578), this protein is Iron-binding protein IscA.